The primary structure comprises 108 residues: Cytochrome c (108 aa).

Heme c is bound by residues Cys-19, Cys-22, His-23, and Met-85.

The protein belongs to the cytochrome c family. In terms of processing, binds 1 heme c group covalently per subunit.

It is found in the mitochondrion intermembrane space. Electron carrier protein. The oxidized form of the cytochrome c heme group can accept an electron from the heme group of the cytochrome c1 subunit of cytochrome reductase. Cytochrome c then transfers this electron to the cytochrome oxidase complex, the final protein carrier in the mitochondrial electron-transport chain. The sequence is that of Cytochrome c from Cochliobolus lunatus (Filamentous fungus).